Consider the following 926-residue polypeptide: Isoleucine--tRNA ligase (926 aa).

The short motif at 57 to 67 (PYANGNIHMGH) is the 'HIGH' region element. Residue Glu-555 participates in L-isoleucyl-5'-AMP binding. The 'KMSKS' region motif lies at 596 to 600 (KMSKS). Lys-599 is a binding site for ATP. 4 residues coordinate Zn(2+): Cys-897, Cys-900, Cys-914, and Cys-917.

The protein belongs to the class-I aminoacyl-tRNA synthetase family. IleS type 1 subfamily. In terms of assembly, monomer. Zn(2+) serves as cofactor.

It localises to the cytoplasm. The catalysed reaction is tRNA(Ile) + L-isoleucine + ATP = L-isoleucyl-tRNA(Ile) + AMP + diphosphate. Catalyzes the attachment of isoleucine to tRNA(Ile). As IleRS can inadvertently accommodate and process structurally similar amino acids such as valine, to avoid such errors it has two additional distinct tRNA(Ile)-dependent editing activities. One activity is designated as 'pretransfer' editing and involves the hydrolysis of activated Val-AMP. The other activity is designated 'posttransfer' editing and involves deacylation of mischarged Val-tRNA(Ile). This is Isoleucine--tRNA ligase from Natranaerobius thermophilus (strain ATCC BAA-1301 / DSM 18059 / JW/NM-WN-LF).